The chain runs to 475 residues: Probable proline--tRNA ligase, mitochondrial (475 aa).

A mitochondrion-targeting transit peptide spans 1-29 (MEGLLTRCRTLSALAACSLRHCRYIIHKC).

Belongs to the class-II aminoacyl-tRNA synthetase family.

It is found in the mitochondrion matrix. The catalysed reaction is tRNA(Pro) + L-proline + ATP = L-prolyl-tRNA(Pro) + AMP + diphosphate. In terms of biological role, mitochondrial aminoacyl-tRNA synthetase that catalyzes the specific attachment of the proline amino acid (aa) to the homologous transfer RNA (tRNA), further participating in protein synthesis. The reaction occurs in a two steps: proline is first activated by ATP to form Pro-AMP and then transferred to the acceptor end of tRNA(Pro). The sequence is that of Probable proline--tRNA ligase, mitochondrial (Pars2) from Mus musculus (Mouse).